The following is a 459-amino-acid chain: MALNDKSIPHETKVVVLLIPFPAQGHLNQFLHLSRLIVAQNIPVHYVGTVTHIRQATLRYNNPTSNIHFHAFQVPPFVSPPPNPEDDFPSHLIPSFEASAHLREPVGKLLQSLSSQAKRVVVINDSLMASVAQDAANISNVENYTFHSFSAFNTSGDFWEEMGKPPVGDFHFPEFPSLEGCIAAQFKGFRTAQYEFRKFNNGDIYNTSRVIEGPYVELLELFNGGKKVWALGPFNPLAVEKKDSIGFRHPCMEWLDKQEPSSVIYISFGTTTALRDEQIQQIATGLEQSKQKFIWVLREADKGDIFAGSEAKRYELPKGFEERVEGMGLVVRDWAPQLEILSHSSTGGFMSHCGWNSCLESITMGVPIATWPMHSDQPRNAVLVTEVLKVGLVVKDWAQRNSLVSASVVENGVRRLMETKEGDEMRQRAVRLKNAIHRSMDEGGVSHMEMGSFIAHISK.

The active-site Proton acceptor is the histidine 26. Position 26 (histidine 26) interacts with an anthocyanidin. Residue aspartate 125 is the Charge relay of the active site. The UDP-alpha-D-glucose site is built by serine 148, alanine 335, glutamine 337, histidine 352, tryptophan 355, asparagine 356, serine 357, glutamate 360, aspartate 376, and glutamine 377.

The protein belongs to the UDP-glycosyltransferase family.

It catalyses the reaction trans-zeatin + UDP-alpha-D-glucose = O-beta-D-glucosyl-trans-zeatin + UDP + H(+). Its function is as follows. May regulate active versus storage forms of cytokinins, and could have an impact on seed growth. Can also use UDP-xylose to catalyze the formation of O-xylosylzeatin but at much lower affinity. The polypeptide is Zeatin O-glucosyltransferase (Phaseolus lunatus (Lima bean)).